A 164-amino-acid chain; its full sequence is Nucleotide-binding protein Emin_0136 (164 aa).

The protein belongs to the YajQ family.

In terms of biological role, nucleotide-binding protein. This is Nucleotide-binding protein Emin_0136 from Elusimicrobium minutum (strain Pei191).